Here is an 86-residue protein sequence, read N- to C-terminus: Small ribosomal subunit protein bS20 (86 aa).

Residues 1 to 25 (MANIKSQQKRNRTNERARLRNKAVK) form a disordered region.

This sequence belongs to the bacterial ribosomal protein bS20 family.

In terms of biological role, binds directly to 16S ribosomal RNA. This Mycobacterium bovis (strain ATCC BAA-935 / AF2122/97) protein is Small ribosomal subunit protein bS20.